Consider the following 104-residue polypeptide: Iron-sulfur cluster assembly protein CyaY (104 aa).

This sequence belongs to the frataxin family.

Functionally, involved in iron-sulfur (Fe-S) cluster assembly. May act as a regulator of Fe-S biogenesis. This chain is Iron-sulfur cluster assembly protein CyaY, found in Aliivibrio fischeri (strain ATCC 700601 / ES114) (Vibrio fischeri).